Reading from the N-terminus, the 689-residue chain is Glycine--tRNA ligase beta subunit (689 aa).

This sequence belongs to the class-II aminoacyl-tRNA synthetase family. In terms of assembly, tetramer of two alpha and two beta subunits.

It localises to the cytoplasm. The catalysed reaction is tRNA(Gly) + glycine + ATP = glycyl-tRNA(Gly) + AMP + diphosphate. The sequence is that of Glycine--tRNA ligase beta subunit from Acinetobacter baylyi (strain ATCC 33305 / BD413 / ADP1).